The sequence spans 740 residues: Isocitrate dehydrogenase [NADP] 2 (740 aa).

Residues asparagine 83 and serine 85 each coordinate NADP(+). Serine 130, asparagine 133, arginine 137, arginine 143, and lysine 253 together coordinate D-threo-isocitrate. Asparagine 133 contributes to the NADP(+) binding site. Residue aspartate 348 coordinates Mg(2+). 2 residues coordinate D-threo-isocitrate: tyrosine 418 and arginine 546. Mg(2+) is bound by residues aspartate 547 and aspartate 551. NADP(+) is bound by residues serine 584, histidine 588, arginine 599, aspartate 601, and arginine 648.

The protein belongs to the monomeric-type IDH family. In terms of assembly, monomer. Mg(2+) serves as cofactor. The cofactor is Mn(2+).

It carries out the reaction D-threo-isocitrate + NADP(+) = 2-oxoglutarate + CO2 + NADPH. IDH activity is not significantly affected by monovalent cations. The combined addition of Mn(2+) and another divalent cation results in the decrease of the activity. Functionally, catalyzes the oxidative decarboxylation of isocitrate to 2-oxoglutarate and carbon dioxide with the concomitant reduction of NADP(+). Cannot use NAD(+). The polypeptide is Isocitrate dehydrogenase [NADP] 2 (Psychrobacter sp. (strain 13A)).